The primary structure comprises 202 residues: N-acetyltransferase 9-like protein (202 aa).

Residues 34-184 form the N-acetyltransferase domain; sequence EEIRRLTGSE…FTFELPKNRL (151 aa).

The protein belongs to the acetyltransferase family. GNAT subfamily.

This is N-acetyltransferase 9-like protein from Caenorhabditis elegans.